Reading from the N-terminus, the 791-residue chain is Linear element protein rec10 (791 aa).

2 disordered regions span residues 462 to 523 (NSVP…AKSN) and 644 to 672 (LLDG…TLIS). A Nuclear localization signal motif is present at residues 485 to 492 (QRRKDGKF). The span at 493 to 503 (AKSTKRKKQKS) shows a compositional bias: basic residues. Residues 644 to 657 (LLDGTCSSPPNNEC) show a composition bias toward polar residues.

In terms of assembly, component of linear elements (LinEs), which are similar to synaptonemal complexes, at least composed of rec27, rec25, rec10 and mug20. Interacts with rec25; the interaction is direct. Interacts with hop1 (via N-terminus); the interaction is direct. Interacts with rec15 (via C-terminus); the interaction is direct.

The protein localises to the nucleus. The protein resides in the chromosome. In terms of biological role, organizes linear element components on chromosomes and is thus required for meiotic DNA recombination. The sequence is that of Linear element protein rec10 from Schizosaccharomyces pombe (strain 972 / ATCC 24843) (Fission yeast).